A 986-amino-acid chain; its full sequence is Vacuolar membrane protease (986 aa).

Over 1 to 20 the chain is Cytoplasmic; sequence MATPRAQKFNPIAFTPGPVT. Residues 21–41 form a helical membrane-spanning segment; sequence LITTIVYLALLIPILVISLVV. Topologically, residues 42–392 are vacuolar; the sequence is PPAPETSPEG…AFAVFRLHTL (351 aa). Asn53, Asn116, and Asn119 each carry an N-linked (GlcNAc...) asparagine glycan. 2 residues coordinate Zn(2+): His175 and Asp187. The active-site Proton acceptor is Glu221. Residue Glu222 participates in Zn(2+) binding. Asn238 carries an N-linked (GlcNAc...) asparagine glycan. The Zn(2+) site is built by Glu247 and His320. Residues 393-413 form a helical membrane-spanning segment; sequence FALSVTLLIVAPLVIFITAIV. At 414–447 the chain is on the cytoplasmic side; sequence LSKTDRMYLFSMSKSLGGTDERVSLRGLRGLFRT. Residues 448-468 traverse the membrane as a helical segment; it reads PIILAVATVIPIGLAYLLEKV. Topologically, residues 469–477 are vacuolar; sequence NPYIVHSSQ. A helical transmembrane segment spans residues 478-498; it reads FSVWSMMISVWIFLAWFLACA. The Cytoplasmic segment spans residues 499-509; the sequence is ADFFRPSALHR. Residues 510–530 traverse the membrane as a helical segment; that stretch reads AYSYTWIFIATWVMLVINTVY. Residues 531 to 534 are Vacuolar-facing; that stretch reads ANQK. The helical transmembrane segment at 535 to 555 threads the bilayer; it reads GIAAGYFVFFYFSGSFLATWV. The Cytoplasmic portion of the chain corresponds to 556–665; sequence SYLELFALPR…WSWTLPRWTW (110 aa). The disordered stretch occupies residues 595 to 620; it reads ELPSDTGPHAEYPGDADETDPTESTS. A helical membrane pass occupies residues 666–686; the sequence is VLQLLLLAPIVLILVGQLALF. Over 687-702 the chain is Vacuolar; sequence LTTSMSQVGSDGVSTF. Residues 703-723 traverse the membrane as a helical segment; it reads IVYLACAVFTTLLFAPLFPFI. The Cytoplasmic portion of the chain corresponds to 724 to 729; that stretch reads HRFTYH. The helical transmembrane segment at 730–750 threads the bilayer; that stretch reads IPTFLFLVFVGTLIYNLVAFP. The Vacuolar portion of the chain corresponds to 751–986; it reads FSPANRLKMF…VEASHGITIQ (236 aa). N-linked (GlcNAc...) asparagine glycans are attached at residues Asn797, Asn840, and Asn948.

Belongs to the peptidase M28 family. Requires Zn(2+) as cofactor.

Its subcellular location is the vacuole membrane. Its function is as follows. May be involved in vacuolar sorting and osmoregulation. The protein is Vacuolar membrane protease of Blastomyces gilchristii (strain SLH14081) (Blastomyces dermatitidis).